A 668-amino-acid polypeptide reads, in one-letter code: DNA ligase (668 aa).

NAD(+) contacts are provided by residues 31 to 35, 80 to 81, and Glu111; these read DYDFD and SL. Lys113 functions as the N6-AMP-lysine intermediate in the catalytic mechanism. NAD(+) contacts are provided by Arg134, Glu170, Lys285, and Lys309. Positions 403, 406, 421, and 427 each coordinate Zn(2+). Positions 587 to 668 constitute a BRCT domain; the sequence is NATEKFIGKT…EFITKLNESE (82 aa).

The protein belongs to the NAD-dependent DNA ligase family. LigA subfamily. Mg(2+) serves as cofactor. It depends on Mn(2+) as a cofactor.

It catalyses the reaction NAD(+) + (deoxyribonucleotide)n-3'-hydroxyl + 5'-phospho-(deoxyribonucleotide)m = (deoxyribonucleotide)n+m + AMP + beta-nicotinamide D-nucleotide.. DNA ligase that catalyzes the formation of phosphodiester linkages between 5'-phosphoryl and 3'-hydroxyl groups in double-stranded DNA using NAD as a coenzyme and as the energy source for the reaction. It is essential for DNA replication and repair of damaged DNA. This Flavobacterium johnsoniae (strain ATCC 17061 / DSM 2064 / JCM 8514 / BCRC 14874 / CCUG 350202 / NBRC 14942 / NCIMB 11054 / UW101) (Cytophaga johnsonae) protein is DNA ligase.